The following is a 176-amino-acid chain: Ribosome maturation factor RimM (176 aa).

A PRC barrel domain is found at 99–174; that stretch reads KNEFYITDLI…IVLIQPEIWN (76 aa).

Belongs to the RimM family. As to quaternary structure, binds ribosomal protein uS19.

Its subcellular location is the cytoplasm. In terms of biological role, an accessory protein needed during the final step in the assembly of 30S ribosomal subunit, possibly for assembly of the head region. Essential for efficient processing of 16S rRNA. May be needed both before and after RbfA during the maturation of 16S rRNA. It has affinity for free ribosomal 30S subunits but not for 70S ribosomes. The protein is Ribosome maturation factor RimM of Leptospira interrogans serogroup Icterohaemorrhagiae serovar copenhageni (strain Fiocruz L1-130).